A 483-amino-acid polypeptide reads, in one-letter code: MTTALEEQNAQQAATAGRVVRVIGAVVDVEFPRGELPALYNALTVEVTLESVKKTVVLEVAQHLGDNLIRTIAMAPTDGLVRGAAVTDTARPISVPVGDVVKGHVFNALGDCLDDVSLNNNPEIERWGIHREPPSFDQLEGKTEILETGIKVIDLLTPYVKGGKIGLFGGAGVGKTVLIQEMITRIAREFSGTSVFAGVGERTREGTDLFLEMEEMGVLQDTALVFGQMDEPPGVRMRVALSGLTMAEYFRDVQNQDVLLFIDNIFRFTQAGSEVSTLLGRMPSAVGYQPTLADEMGVLQERITSTKGRSITSLQAVYVPADDYTDPAPATTFAHLDATTELDRSIASKGIYPAVNPLTSTSRILEPAIVGERHYEVSQRVIGILQKNKELQDIIAILGMDELSEEDKITVARARRIERFLGQNFFVAEKFTGLPGSYVPLTDTVDAFERICNGDFDHYPEQAFNGLGGLDDVEAAYKKLTGK.

169–176 serves as a coordination point for ATP; the sequence is GGAGVGKT.

This sequence belongs to the ATPase alpha/beta chains family. In terms of assembly, F-type ATPases have 2 components, CF(1) - the catalytic core - and CF(0) - the membrane proton channel. CF(1) has five subunits: alpha(3), beta(3), gamma(1), delta(1), epsilon(1). CF(0) has three main subunits: a(1), b(2) and c(9-12). The alpha and beta chains form an alternating ring which encloses part of the gamma chain. CF(1) is attached to CF(0) by a central stalk formed by the gamma and epsilon chains, while a peripheral stalk is formed by the delta and b chains.

Its subcellular location is the cell membrane. The enzyme catalyses ATP + H2O + 4 H(+)(in) = ADP + phosphate + 5 H(+)(out). Produces ATP from ADP in the presence of a proton gradient across the membrane. The catalytic sites are hosted primarily by the beta subunits. The protein is ATP synthase subunit beta of Corynebacterium glutamicum (strain R).